Reading from the N-terminus, the 94-residue chain is Small ribosomal subunit protein uS19 (94 aa).

It belongs to the universal ribosomal protein uS19 family.

Functionally, protein S19 forms a complex with S13 that binds strongly to the 16S ribosomal RNA. This chain is Small ribosomal subunit protein uS19, found in Acetivibrio thermocellus (strain ATCC 27405 / DSM 1237 / JCM 9322 / NBRC 103400 / NCIMB 10682 / NRRL B-4536 / VPI 7372) (Clostridium thermocellum).